The sequence spans 295 residues: Trimeric intracellular cation channel type A (295 aa).

Residues 1-18 (MELLSALSLDDLAASFSK) are Lumenal-facing. Residues 19-39 (LPVFPLFDVAYYIISILYLKY) traverse the membrane as a helical segment. At 40–51 (EPGAVDLSKRSP) the chain is on the cytoplasmic side. The chain crosses the membrane as a helical span at residues 52–72 (VASWLCAMLYCFGSYILADVL). Over 73–84 (LGESPIHYFSNN) the chain is Lumenal. Ca(2+) is bound at residue Gly-74. A helical membrane pass occupies residues 85 to 105 (ANILLASAVWYLTFFCPLNIF). At 106-144 (YKIVSFLPVKLVLVGMKEVVRVRKIAMGIHHAHHHYHHG) the chain is on the cytoplasmic side. Lys-122 and Arg-126 together coordinate a 1,2-diacyl-sn-glycero-3-phospho-(1D-myo-inositol-4,5-bisphosphate). A helical transmembrane segment spans residues 145–165 (WVIMVLIGWVKGSGVALMSNL). Residues 166-178 (EQLLRGVWKPETN) lie on the Lumenal side of the membrane. Residues 179-199 (EILHMSFPTKASLYGAILFTL) form a helical membrane-spanning segment. The Cytoplasmic portion of the chain corresponds to 200–201 (QQ). The helical transmembrane segment at 202–222 (AHWLPISKAYLIFFFTLFMAV) threads the bilayer. The Lumenal segment spans residues 223–233 (CKIYMTATHSH). Residues 234–254 (GSPFAIFESGICYVLFAAANG) form a helical membrane-spanning segment. Over 255–295 (DHDDHGNHHHHHDDHDVSHSAGKSKEEHNEGTRKRKTKKAE) the chain is Cytoplasmic. The disordered stretch occupies residues 258 to 295 (DHGNHHHHHDDHDVSHSAGKSKEEHNEGTRKRKTKKAE). A compositionally biased stretch (basic and acidic residues) spans 267–286 (DDHDVSHSAGKSKEEHNEGT).

It belongs to the TMEM38 family. In terms of assembly, homotrimer; conformation seems to be controled by binding to diacylglycerol (DAG).

The protein localises to the sarcoplasmic reticulum membrane. It is found in the nucleus membrane. The catalysed reaction is K(+)(in) = K(+)(out). With respect to regulation, channel activity is activated by a change of voltage within the sarcoplasmic reticulum lumen and blocked by luminal high Ca(2+) levels. In terms of biological role, intracellular monovalent cation channel required for maintenance of rapid intracellular calcium release. Acts as a potassium counter-ion channel that functions in synchronization with calcium release from intracellular stores. Opened by a change of voltage within the sarcoplasmic reticulum lumen. This is Trimeric intracellular cation channel type A (tmem38a) from Xenopus laevis (African clawed frog).